We begin with the raw amino-acid sequence, 2002 residues long: Methylcytosine dioxygenase TET2 (2002 aa).

The span at 1 to 11 (MEQDRTNHVEG) shows a compositional bias: basic and acidic residues. Positions 1–22 (MEQDRTNHVEGNRLSPFLIPSP) are disordered. Residues serine 15, serine 75, and serine 99 each carry the phosphoserine modification. Residues 113–124 (KQDQKANGERRN) show a composition bias toward basic and acidic residues. 7 disordered regions span residues 113–154 (KQDQ…VSSV), 266–287 (HPSH…LPPK), 349–368 (GEEF…GSSE), 390–488 (DSFS…VNRN), 703–748 (LNQQ…QQKL), 930–949 (VPDQ…TQKH), and 1075–1095 (DSHT…PTKR). 2 stretches are compositionally biased toward polar residues: residues 126–143 (GVSQ…NVSD) and 267–283 (PSHT…SNSE). The segment covering 397–416 (TPPPPSQLLLSPPPPLPQVP) has biased composition (pro residues). Composition is skewed to polar residues over residues 479–488 (RPQNNCVNRN) and 703–718 (LNQQ…NSHL). A compositionally biased stretch (low complexity) spans 731-748 (QPSQSSHLPQNQQQQQKL). Polar residues-rich tracts occupy residues 935 to 944 (GSHTQTPPQK) and 1081 to 1095 (LEQQ…PTKR). Phosphoserine is present on residues serine 1107 and serine 1109. Residues cysteine 1133, cysteine 1135, cysteine 1193, histidine 1219, and cysteine 1221 each coordinate Zn(2+). A 2-oxoglutarate-binding site is contributed by arginine 1261. Zn(2+) is bound by residues cysteine 1271, cysteine 1273, cysteine 1289, and cysteine 1298. The tract at residues 1290 to 1303 (SWSMYYNGCKFARS) is interaction with DNA. A Glycyl lysine isopeptide (Lys-Gly) (interchain with G-Cter in ubiquitin) cross-link involves residue lysine 1299. Cysteine 1358 serves as a coordination point for Zn(2+). Cysteine 1374 provides a ligand contact to 2-oxoglutarate. Histidine 1380 is a Zn(2+) binding site. Fe cation is bound by residues histidine 1382 and aspartate 1384. Asparagine 1387 is a binding site for substrate. Histidine 1416 is a binding site for 2-oxoglutarate. Disordered stretches follow at residues 1475 to 1507 (AAEK…NASQ) and 1521 to 1587 (VMQQ…HTSD). Over residues 1477 to 1487 (EKLSSLENSSN) the composition is skewed to low complexity. Over residues 1496–1507 (PSRTKQTENASQ) the composition is skewed to polar residues. Composition is skewed to low complexity over residues 1523–1532 (QQSQQPQPLQ) and 1539–1551 (QQQQ…QPHH). Polar residues predominate over residues 1554–1568 (TESVNSYSASGSTNP). An Asymmetric dimethylarginine modification is found at arginine 1682. Histidine 1881 contributes to the Fe cation binding site. 1896–1898 (RIS) lines the 2-oxoglutarate pocket. Residue 1902-1904 (YQH) coordinates substrate. Zn(2+) is bound at residue histidine 1912. Positions 1932–1961 (CEKYGPDYVPQKSHGKKVKREPAEPHETSE) are disordered. The segment covering 1951-1960 (REPAEPHETS) has biased composition (basic and acidic residues).

It belongs to the TET family. As to quaternary structure, interacts with HCFC1. Interacts with OGT. Interacts with PROSER1; this interaction mediates TET2 O-GlcNAcylation and stability by promoting the interaction between OGT and TET2. Directly interacts (via C-terminus) with the DCAF1 component of the CRL4(VprBP) E3 ubiquitin-protein ligase complex. It depends on Fe(2+) as a cofactor. Requires Zn(2+) as cofactor. Post-translationally, may be glycosylated. It is unclear whether interaction with OGT leads to GlcNAcylation. According to a report, it is not GlcNAcylated by OGT. In contrast, another group reports GlcNAcylation by OGT in mouse ortholog. In terms of processing, monoubiquitinated at Lys-1299 by the DCX (DDB1-CUL4-X-box) E3 ubiquitin-protein ligase complex called CRL4(VprBP) or CUL4A-RBX1-DDB1-DCAF1/VPRBP complex; this modification promotes binding to DNA. Acetylated. Deacetylase HDAC6 acts as a valine sensor by binding to valine through its primate-specific SE14 repeat region and deacetylates TET2 following valine deprivation which promotes TET2-dependent DNA demethylation. As to expression, broadly expressed. Highly expressed in hematopoietic cells; highest expression observed in granulocytes. Expression is reduced in granulocytes from peripheral blood of patients affected by myelodysplastic syndromes.

Its subcellular location is the nucleus. It is found in the chromosome. The enzyme catalyses a 5-methyl-2'-deoxycytidine in DNA + 2-oxoglutarate + O2 = a 5-hydroxymethyl-2'-deoxycytidine in DNA + succinate + CO2. The catalysed reaction is a 5-hydroxymethyl-2'-deoxycytidine in DNA + 2-oxoglutarate + O2 = a 5-formyl-2'-deoxycytidine in DNA + succinate + CO2 + H2O. It catalyses the reaction a 5-formyl-2'-deoxycytidine in DNA + 2-oxoglutarate + O2 = a 5-carboxyl-2'-deoxycytidine in DNA + succinate + CO2 + H(+). Functionally, dioxygenase that catalyzes the conversion of the modified genomic base 5-methylcytosine (5mC) into 5-hydroxymethylcytosine (5hmC) and plays a key role in active DNA demethylation. Has a preference for 5-hydroxymethylcytosine in CpG motifs. Also mediates subsequent conversion of 5hmC into 5-formylcytosine (5fC), and conversion of 5fC to 5-carboxylcytosine (5caC). Conversion of 5mC into 5hmC, 5fC and 5caC probably constitutes the first step in cytosine demethylation. Methylation at the C5 position of cytosine bases is an epigenetic modification of the mammalian genome which plays an important role in transcriptional regulation. In addition to its role in DNA demethylation, also involved in the recruitment of the O-GlcNAc transferase OGT to CpG-rich transcription start sites of active genes, thereby promoting histone H2B GlcNAcylation by OGT. The polypeptide is Methylcytosine dioxygenase TET2 (TET2) (Homo sapiens (Human)).